The chain runs to 609 residues: MNKTQRHINWLLAVSAATALPVTAAEMINVNDGSLLNQALKAQSQSVAPVETGFKQMKRVVLPNGKVKVRYQQTHHGLPVFNTSVVATESKSGSSEVFGVMAQGIADDVSTLTPSVEMKQAISIAKSRFQQQEKMVAEPATENEKAELMVRLDDNNQAQLVYLVDFFVAEDHPARPFFFIDAQTGEVLQTWDGLNHAQADGTGPGGNTKTGRYEYGSDFPPFVIDKVGTKCSMNNSAVRTVDLNGSTSGNTTYSYTCNDSTNYNDYKAINGAYSPLNDAHYFGKVVFDMYKDWMNTTPLTFQLTMRVHYGNNYENAFWNGSSMTFGDGYSTFYPLVDINVSAHEVSHGFTEQNSGLVYENMSGGMNEAFSDIAGEAAEFYMKGSVDWVVGADIFKSSGGLRYFDQPSRDGRSIDHASDYYNGLNVHYSSGVFNRAFYLLANKAGWDVRKGFEVFTLANQLYWTANSTFDEGGCGVVKAASDMGYSVADVEDAFNTVGVNASCGATPPPSGDVLEIGKPLANLSGNRNDMTYYTFTPSSSSSVVIKITGGTGDADLYVKAGSKPTTTSYDCRPYKYGNEEQCSISAQAGTTYHVMLRGYSNYAGVTLRAD.

Positions methionine 1–alanine 24 are cleaved as a signal peptide. Residues alanine 25–histidine 196 constitute a propeptide that is removed on maturation. Residue histidine 343 participates in Zn(2+) binding. The active site involves glutamate 344. Zn(2+)-binding residues include histidine 347 and glutamate 367. The active-site Proton donor is histidine 426.

This sequence belongs to the peptidase M4 family. It depends on Zn(2+) as a cofactor.

The protein localises to the secreted. The enzyme catalyses Preferential cleavage of bonds with bulky hydrophobic groups in P2 and P1'. Phe at P1' is the most favored residue, which distinguished this enzyme from thermolysin.. Its function is as follows. Extracellular zinc metalloprotease. The protein is Neutral protease (nprV) of Vibrio proteolyticus (Aeromonas proteolytica).